The chain runs to 243 residues: UPF0280 protein Memar_1519 (243 aa).

It belongs to the UPF0280 family.

The chain is UPF0280 protein Memar_1519 from Methanoculleus marisnigri (strain ATCC 35101 / DSM 1498 / JR1).